The sequence spans 343 residues: Probable dual-specificity RNA methyltransferase RlmN (343 aa).

Glutamate 83 (proton acceptor) is an active-site residue. One can recognise a Radical SAM core domain in the interval 89 to 323; sequence YLDRKTICVS…VSVRRSRGKD (235 aa). Cysteine 96 and cysteine 328 are oxidised to a cystine. [4Fe-4S] cluster-binding residues include cysteine 103, cysteine 107, and cysteine 110. Residues 153–154, serine 185, 209–211, and asparagine 285 each bind S-adenosyl-L-methionine; these read GE and SLH. Catalysis depends on cysteine 328, which acts as the S-methylcysteine intermediate.

The protein belongs to the radical SAM superfamily. RlmN family. [4Fe-4S] cluster is required as a cofactor.

The protein localises to the cytoplasm. It catalyses the reaction adenosine(2503) in 23S rRNA + 2 reduced [2Fe-2S]-[ferredoxin] + 2 S-adenosyl-L-methionine = 2-methyladenosine(2503) in 23S rRNA + 5'-deoxyadenosine + L-methionine + 2 oxidized [2Fe-2S]-[ferredoxin] + S-adenosyl-L-homocysteine. The enzyme catalyses adenosine(37) in tRNA + 2 reduced [2Fe-2S]-[ferredoxin] + 2 S-adenosyl-L-methionine = 2-methyladenosine(37) in tRNA + 5'-deoxyadenosine + L-methionine + 2 oxidized [2Fe-2S]-[ferredoxin] + S-adenosyl-L-homocysteine. In terms of biological role, specifically methylates position 2 of adenine 2503 in 23S rRNA and position 2 of adenine 37 in tRNAs. This is Probable dual-specificity RNA methyltransferase RlmN from Deinococcus deserti (strain DSM 17065 / CIP 109153 / LMG 22923 / VCD115).